A 78-amino-acid chain; its full sequence is uncharacterized protein (78 aa).

This is an uncharacterized protein from Enterobacteria phage RB51 (Bacteriophage RB51).